The following is a 565-amino-acid chain: Liver carboxylesterase 1 (565 aa).

Residues 1–18 (MWLCALSLISLTACLSLG) form the signal peptide. Residues Cys87 and Cys116 are joined by a disulfide bond. Ser221 functions as the Acyl-ester intermediate in the catalytic mechanism. A disulfide bridge links Cys273 with Cys284. Glu353 serves as the catalytic Charge relay system. At Ser378 the chain carries Phosphoserine. A glycan (N-linked (GlcNAc...) asparagine) is linked at Asn388. The active-site Charge relay system is the His466. Residue Asn489 is glycosylated (N-linked (GlcNAc...) asparagine).

The protein belongs to the type-B carboxylesterase/lipase family. In terms of assembly, homotrimer and homohexamer. Binds to beta-glucuronidase. Detected in kidney, liver and lung.

The protein resides in the endoplasmic reticulum lumen. The protein localises to the cytoplasm. It localises to the lipid droplet. The catalysed reaction is a carboxylic ester + H2O = an alcohol + a carboxylate + H(+). It carries out the reaction cholesteryl (9Z-octadecenoate) + H2O = cholesterol + (9Z)-octadecenoate + H(+). The enzyme catalyses 2-(5Z,8Z,11Z,14Z-eicosatetraenoyl)-glycerol + H2O = glycerol + (5Z,8Z,11Z,14Z)-eicosatetraenoate + H(+). It catalyses the reaction prostaglandin E2 1-glyceryl ester + H2O = prostaglandin E2 + glycerol + H(+). The catalysed reaction is a cholesterol ester + H2O = cholesterol + a fatty acid + H(+). It carries out the reaction prostaglandin F2alpha 1-glyceryl ester + H2O = prostaglandin F2alpha + glycerol + H(+). Functionally, involved in the detoxification of xenobiotics and in the activation of ester and amide prodrugs. Hydrolyzes aromatic and aliphatic esters, but has no catalytic activity toward amides or a fatty acyl-CoA ester. Displays fatty acid ethyl ester synthase activity, catalyzing the ethyl esterification of oleic acid to ethyloleate. Converts monoacylglycerides to free fatty acids and glycerol. Hydrolyzes of 2-arachidonoylglycerol and prostaglandins. Hydrolyzes cellular cholesteryl esters to free cholesterols and promotes reverse cholesterol transport (RCT) by facilitating both the initial and final steps in the process. First of all, allows free cholesterol efflux from macrophages to extracellular cholesterol acceptors and secondly, releases free cholesterol from lipoprotein-delivered cholesteryl esters in the liver for bile acid synthesis or direct secretion into the bile. The sequence is that of Liver carboxylesterase 1 from Mus musculus (Mouse).